The sequence spans 20 residues: Thylakoid lumenal 14.7 kDa protein (20 aa).

Residues 1–20 (KTGVNKPELLPKEETTVIDV) are disordered. Residues 9–20 (LLPKEETTVIDV) show a composition bias toward basic and acidic residues.

Its subcellular location is the plastid. The protein resides in the chloroplast thylakoid lumen. This is Thylakoid lumenal 14.7 kDa protein from Spinacia oleracea (Spinach).